The primary structure comprises 372 residues: MPLSDFHVSEPFTLGIELEMQVVNPPGYDLSQDSSMLIDAVKNEITAGEVKHDITESMLELATDVCRDINQAAGQFSAMQKVVLQAAADHHLEICGGGTHPFQKWQRQEVCDNERYQRTLENFGYPIQQATVFGQHVHVGCASGDDAIYLLHGLSRFVPHFIALSAASPYMQGTDTRFASSRPNIFSAFPDNGPMPWVSNWQQFEALFRCLSYTTMIDSIKDLHWDIRPSPHFGTVEVRVMDTPLTLSHAVNMAGLIQATAHWLLTERPFKHQEKDYLLYKFNRFQACRYGLEGVITDPYTGDRRPLTEDTLRLLEKIAPSAHKIAASSAIEALHRQVVSGLNEAQLMRDFVADGGSLIGLVKKHCEIWAGD.

The protein belongs to the glutamate--cysteine ligase type 2 family. YbdK subfamily. Homodimer.

It carries out the reaction L-cysteine + L-glutamate + ATP = gamma-L-glutamyl-L-cysteine + ADP + phosphate + H(+). In terms of biological role, ATP-dependent carboxylate-amine ligase which exhibits weak glutamate--cysteine ligase activity. This Shigella dysenteriae serotype 1 (strain Sd197) protein is Putative glutamate--cysteine ligase 2 (ybdK).